The following is a 218-amino-acid chain: MKKHDGIIVLLSGGMDSATLLWLAKREFKKVYAISFDYGQRHKVELKYAKELAKLAEVEDHFIVQVPFYTSLKGSALIDESVEVPKGEYPENEPPVTTVPMRNLIFLSIASAFADNLEVNYIGIGVHALDTPYPDCRPEFITAAEAAINAGSTFVAKKKERMHVYAPFLGMSKRDIALLGKELGVPFEKTYSCYMGTEPPCGECPTCIQREEALRGIL.

Residue 11–21 (LSGGMDSATLL) participates in ATP binding. Cysteine 193, cysteine 201, cysteine 204, and cysteine 207 together coordinate Zn(2+).

This sequence belongs to the QueC family. Zn(2+) is required as a cofactor.

It catalyses the reaction 7-carboxy-7-deazaguanine + NH4(+) + ATP = 7-cyano-7-deazaguanine + ADP + phosphate + H2O + H(+). The protein operates within purine metabolism; 7-cyano-7-deazaguanine biosynthesis. Its function is as follows. Catalyzes the ATP-dependent conversion of 7-carboxy-7-deazaguanine (CDG) to 7-cyano-7-deazaguanine (preQ(0)). This is 7-cyano-7-deazaguanine synthase from Aquifex aeolicus (strain VF5).